Here is a 310-residue protein sequence, read N- to C-terminus: Thioredoxin reductase (310 aa).

Asparagine 34–glutamine 41 serves as a coordination point for FAD. An intrachain disulfide couples cysteine 135 to cysteine 138. Aspartate 281–alanine 290 serves as a coordination point for FAD.

The protein belongs to the class-II pyridine nucleotide-disulfide oxidoreductase family. Homodimer. FAD serves as cofactor.

The protein localises to the cytoplasm. The enzyme catalyses [thioredoxin]-dithiol + NADP(+) = [thioredoxin]-disulfide + NADPH + H(+). The chain is Thioredoxin reductase (trxB) from Rickettsia bellii (strain RML369-C).